We begin with the raw amino-acid sequence, 181 residues long: Oligoribonuclease (181 aa).

The 164-residue stretch at 8-171 (LIWIDLEMTG…LDIQESIAEL (164 aa)) folds into the Exonuclease domain. Tyr-129 is a catalytic residue.

The protein belongs to the oligoribonuclease family.

It is found in the cytoplasm. In terms of biological role, 3'-to-5' exoribonuclease specific for small oligoribonucleotides. This is Oligoribonuclease from Shewanella amazonensis (strain ATCC BAA-1098 / SB2B).